Reading from the N-terminus, the 156-residue chain is IFN signaling evasion protein OPG029 (156 aa).

It belongs to the orthopoxvirus OPG029 family. In terms of assembly, interacts with host TANK, TBKBP1 and AZI2; these interactions prevent interferon production. Interacts with host STAT2.

Its function is as follows. Prevents establishment of cellular antiviral state by blocking virus-induced phosphorylation and activation of interferon regulatory factors 3/IRF3 and 7/IRF7, transcription factors critical for the induction of interferons alpha and beta. This blockage is produced through the inhibition of host TBK1, by binding host TBK1 adapter proteins TBKBP1 and AZI2, thereby producing a strong inhibition of the phosphorylation and activation of IRF3 and IRF7. Also acts as an inhibitor of the cellular response to type I IFN by interacting with host STAT2. Mechanistically, exerts its inhibitory effect after host ISGF3 complex (composed of STAT1, STAT2 and IRF9) binding to the interferon stimulated response element (ISRE). In Variola virus (isolate Human/India/Ind3/1967) (VARV), this protein is IFN signaling evasion protein OPG029 (OPG029).